The chain runs to 144 residues: Putative pre-16S rRNA nuclease (144 aa).

The protein belongs to the YqgF nuclease family.

It is found in the cytoplasm. In terms of biological role, could be a nuclease involved in processing of the 5'-end of pre-16S rRNA. This chain is Putative pre-16S rRNA nuclease, found in Picosynechococcus sp. (strain ATCC 27264 / PCC 7002 / PR-6) (Agmenellum quadruplicatum).